The chain runs to 328 residues: Naphthalene 1,2-dioxygenase system ferredoxin--NAD(P)(+), reductase component (328 aa).

The region spanning 1-89 is the 2Fe-2S ferredoxin-type domain; that stretch reads MELLIQPNNR…NCAIEVPEAD (89 aa). [2Fe-2S] cluster-binding residues include cysteine 35, cysteine 40, cysteine 43, and cysteine 73. The 98-residue stretch at 96 to 193 folds into the FAD-binding FR-type domain; it reads ARIIKGTVVA…SGPLGTAYLR (98 aa).

The protein belongs to the bacterial ring-hydroxylating dioxygenase ferredoxin reductase component family. In terms of assembly, the naphthalene dioxygenase (NDO) multicomponent enzyme system is composed of an electron transfer component and a dioxygenase component (iron sulfur protein (ISP)). The electron transfer component is composed of a ferredoxin reductase (NdoR) and a ferredoxin (NdoA), and the dioxygenase component is formed of a heterohexamer (trimer of heterodimers) of three large alpha subunits (NdoB) and three small beta subunits (NdoC). The cofactor is [2Fe-2S] cluster. It depends on FAD as a cofactor.

It carries out the reaction 2 reduced [2Fe-2S]-[ferredoxin] + NAD(+) + H(+) = 2 oxidized [2Fe-2S]-[ferredoxin] + NADH. The enzyme catalyses 2 reduced [2Fe-2S]-[ferredoxin] + NADP(+) + H(+) = 2 oxidized [2Fe-2S]-[ferredoxin] + NADPH. The protein operates within aromatic compound metabolism; naphthalene degradation. Its activity is regulated as follows. Strongly inhibited by p-chloromercuribenzoate. Also inhibited by N-ethylmaleimide and o-phenanthroline. In terms of biological role, component of the naphthalene dioxygenase (NDO) multicomponent enzyme system which catalyzes the incorporation of both atoms of molecular oxygen into naphthalene to form cis-(1R,2S)-dihydroxy-1,2-dihydronaphthalene. Ferredoxin reductase catalyzes the transfer of electrons from NADH to ferredoxin (NdoA). NADPH is also effective but yields only 39% of the activity obtained with NADH. Also able to catalyze the cis-dihydroxylation of biphenyl and phenanthrene. The polypeptide is Naphthalene 1,2-dioxygenase system ferredoxin--NAD(P)(+), reductase component (ndoR) (Pseudomonas putida (Arthrobacter siderocapsulatus)).